We begin with the raw amino-acid sequence, 512 residues long: Glucose-6-phosphate 1-dehydrogenase (512 aa).

NADP(+)-binding positions include Arg61, Glu103 to Phe104, and Lys171. His201, Lys205, Glu239, and Asp258 together coordinate substrate. His263 functions as the Proton acceptor in the catalytic mechanism. 2 residues coordinate substrate: Lys360 and Lys365. Residues Gln479–Leu512 form a disordered region. Residues Lys496 to Leu512 are compositionally biased toward basic and acidic residues.

It belongs to the glucose-6-phosphate dehydrogenase family.

It carries out the reaction D-glucose 6-phosphate + NADP(+) = 6-phospho-D-glucono-1,5-lactone + NADPH + H(+). Its pathway is carbohydrate degradation; pentose phosphate pathway; D-ribulose 5-phosphate from D-glucose 6-phosphate (oxidative stage): step 1/3. In terms of biological role, catalyzes the oxidation of glucose 6-phosphate to 6-phosphogluconolactone. The chain is Glucose-6-phosphate 1-dehydrogenase from Chlamydia pneumoniae (Chlamydophila pneumoniae).